Here is a 133-residue protein sequence, read N- to C-terminus: Fatty acid-binding protein, heart (133 aa).

N-acetylalanine is present on alanine 2. Threonine 8 is subject to Phosphothreonine. The residue at position 20 (tyrosine 20) is a Phosphotyrosine; by Tyr-kinases. A Phosphoserine modification is found at serine 23. Threonine 30 carries the phosphothreonine modification. Serine 83 carries the phosphoserine modification. Arginine 127–tyrosine 129 contacts (9Z)-octadecenoate. Hexadecanoate is bound at residue arginine 127–tyrosine 129. Arginine 127–tyrosine 129 serves as a coordination point for octadecanoate.

Heart, but also skeletal muscle, kidney, brain and mammary gland.

It localises to the cytoplasm. Its function is as follows. FABPs are thought to play a role in the intracellular transport of long-chain fatty acids and their acyl-CoA esters. The chain is Fatty acid-binding protein, heart (Fabp3) from Rattus norvegicus (Rat).